The sequence spans 291 residues: MRLLIITGISGAGKSLVVKYLEDIGFFCVDNLPPLLIGKFAEICLKSRGKISKVALVIDIRGGELFNDLVPELNALKESGIDYEILFLEASDQVLIKRYKESRRIHPLAPEGRLIKGIKTEREILSQIRKNATYIIDTSNLTPRQLKEEILAIFVEGRKFDGMIVNIISFGFKYGIPIECDLVFDVRFIPNPYYIESMKYKTGKDEEVRNYVMSFAETAEFMTKLKDLVDFLIPNYIKEGKSQLVIGVGCTGGRHRSVAISEALFSYLCGREHRVFIDHRDIDKDGRSNRR.

8 to 15 (GISGAGKS) lines the ATP pocket. Residue 59-62 (DIRG) participates in GTP binding.

This sequence belongs to the RapZ-like family.

In terms of biological role, displays ATPase and GTPase activities. This Acetivibrio thermocellus (strain ATCC 27405 / DSM 1237 / JCM 9322 / NBRC 103400 / NCIMB 10682 / NRRL B-4536 / VPI 7372) (Clostridium thermocellum) protein is Nucleotide-binding protein Cthe_0113.